Reading from the N-terminus, the 126-residue chain is Histone H2B type 1-J (126 aa).

The segment covering 1-12 (MPEPAKSAPAPK) has biased composition (low complexity). Residues 1–35 (MPEPAKSAPAPKKGSKKAVTKAQKKDGKKRKRSRK) are disordered. Position 2 is an N-acetylproline (Pro-2). Glu-3 carries the post-translational modification ADP-ribosyl glutamic acid. Lys-6 is subject to N6-(2-hydroxyisobutyryl)lysine; alternate. Lys-6 carries the post-translational modification N6-(beta-hydroxybutyryl)lysine; alternate. Position 6 is an N6-acetyllysine; alternate (Lys-6). An N6-butyryllysine; alternate modification is found at Lys-6. Lys-6 bears the N6-crotonyllysine; alternate mark. Lys-6 bears the N6-lactoyllysine; alternate mark. Lys-6 participates in a covalent cross-link: Glycyl lysine isopeptide (Lys-Gly) (interchain with G-Cter in SUMO2); alternate. The residue at position 7 (Ser-7) is an ADP-ribosylserine. At Lys-12 the chain carries N6-(beta-hydroxybutyryl)lysine; alternate. N6-acetyllysine; alternate occurs at positions 12 and 13. Residues Lys-12 and Lys-13 each carry the N6-crotonyllysine; alternate modification. N6-lactoyllysine; alternate is present on Lys-12. Lys-13 bears the N6-(2-hydroxyisobutyryl)lysine; alternate mark. Ser-15 is subject to Phosphoserine; by STK4/MST1. N6-acetyllysine; alternate is present on residues Lys-16, Lys-17, Lys-21, and Lys-24. 4 positions are modified to N6-crotonyllysine; alternate: Lys-16, Lys-17, Lys-21, and Lys-24. 4 positions are modified to N6-lactoyllysine; alternate: Lys-16, Lys-17, Lys-21, and Lys-24. An N6-(beta-hydroxybutyryl)lysine; alternate mark is found at Lys-17 and Lys-21. Lys-17 is modified (N6-glutaryllysine; alternate). N6-(2-hydroxyisobutyryl)lysine; alternate occurs at positions 21 and 24. Lys-21 is modified (N6-butyryllysine; alternate). Lys-21 is covalently cross-linked (Glycyl lysine isopeptide (Lys-Gly) (interchain with G-Cter in SUMO2); alternate). Lys-25 is modified (N6-(2-hydroxyisobutyryl)lysine). Lys-35 is subject to N6-(2-hydroxyisobutyryl)lysine; alternate. Residue Lys-35 is modified to N6-(beta-hydroxybutyryl)lysine; alternate. The residue at position 35 (Lys-35) is an N6-crotonyllysine; alternate. An N6-glutaryllysine; alternate modification is found at Lys-35. At Lys-35 the chain carries N6-succinyllysine; alternate. Residue Lys-35 forms a Glycyl lysine isopeptide (Lys-Gly) (interchain with G-Cter in ubiquitin); alternate linkage. At Glu-36 the chain carries PolyADP-ribosyl glutamic acid. Ser-37 is subject to Phosphoserine; by AMPK. An N6-(2-hydroxyisobutyryl)lysine; alternate mark is found at Lys-44, Lys-47, and Lys-58. Position 44 is an N6-lactoyllysine; alternate (Lys-44). N6-glutaryllysine; alternate occurs at positions 44 and 47. Lys-47 carries the post-translational modification N6-methyllysine; alternate. Lys-58 bears the N6,N6-dimethyllysine; alternate mark. Arg-80 is modified (dimethylated arginine). An N6-(2-hydroxyisobutyryl)lysine; alternate modification is found at Lys-86. Position 86 is an N6-(beta-hydroxybutyryl)lysine; alternate (Lys-86). Lys-86 is modified (N6-acetyllysine; alternate). N6-lactoyllysine; alternate is present on Lys-86. Residue Lys-86 is modified to N6,N6,N6-trimethyllysine; alternate. 2 positions are modified to omega-N-methylarginine: Arg-87 and Arg-93. Position 109 is an N6-(2-hydroxyisobutyryl)lysine; alternate (Lys-109). Lys-109 carries the N6-lactoyllysine; alternate modification. Residue Lys-109 is modified to N6-glutaryllysine; alternate. Lys-109 is subject to N6-methyllysine; alternate. The O-linked (GlcNAc) serine glycan is linked to Ser-113. Thr-116 bears the Phosphothreonine mark. 2 positions are modified to N6-(2-hydroxyisobutyryl)lysine; alternate: Lys-117 and Lys-121. An N6-(beta-hydroxybutyryl)lysine; alternate mark is found at Lys-117 and Lys-121. Lys-117 and Lys-121 each carry N6-lactoyllysine; alternate. Residues Lys-117 and Lys-121 each carry the N6-glutaryllysine; alternate modification. 2 positions are modified to N6-succinyllysine; alternate: Lys-117 and Lys-121. At Lys-117 the chain carries N6-malonyllysine; alternate. The residue at position 117 (Lys-117) is an N6-methylated lysine; alternate. Lys-121 is covalently cross-linked (Glycyl lysine isopeptide (Lys-Gly) (interchain with G-Cter in ubiquitin); alternate).

The protein belongs to the histone H2B family. The nucleosome is a histone octamer containing two molecules each of H2A, H2B, H3 and H4 assembled in one H3-H4 heterotetramer and two H2A-H2B heterodimers. The octamer wraps approximately 147 bp of DNA. Heterodimer H2BC11 and H2AZ1 interacts with VPS72 (via N-terminal domain). Post-translationally, monoubiquitination at Lys-35 (H2BK34Ub) by the MSL1/MSL2 dimer is required for histone H3 'Lys-4' (H3K4me) and 'Lys-79' (H3K79me) methylation and transcription activation at specific gene loci, such as HOXA9 and MEIS1 loci. Similarly, monoubiquitination at Lys-121 (H2BK120Ub) by the RNF20/40 complex gives a specific tag for epigenetic transcriptional activation and is also prerequisite for histone H3 'Lys-4' and 'Lys-79' methylation. It also functions cooperatively with the FACT dimer to stimulate elongation by RNA polymerase II. H2BK120Ub also acts as a regulator of mRNA splicing: deubiquitination by USP49 is required for efficient cotranscriptional splicing of a large set of exons. Phosphorylation at Ser-37 (H2BS36ph) by AMPK in response to stress promotes transcription. Phosphorylated on Ser-15 (H2BS14ph) by STK4/MST1 during apoptosis; which facilitates apoptotic chromatin condensation. Also phosphorylated on Ser-15 in response to DNA double strand breaks (DSBs), and in correlation with somatic hypermutation and immunoglobulin class-switch recombination. In terms of processing, glcNAcylation at Ser-113 promotes monoubiquitination of Lys-121. It fluctuates in response to extracellular glucose, and associates with transcribed genes. Post-translationally, ADP-ribosylated by PARP1 or PARP2 on Ser-7 (H2BS6ADPr) in response to DNA damage. H2BS6ADPr promotes recruitment of CHD1L. Mono-ADP-ribosylated on Glu-3 (H2BE2ADPr) by PARP3 in response to single-strand breaks. Poly ADP-ribosylation on Glu-36 (H2BE35ADPr) by PARP1 regulates adipogenesis: it inhibits phosphorylation at Ser-37 (H2BS36ph), thereby blocking expression of pro-adipogenetic genes. Crotonylation (Kcr) is specifically present in male germ cells and marks testis-specific genes in post-meiotic cells, including X-linked genes that escape sex chromosome inactivation in haploid cells. Crotonylation marks active promoters and enhancers and confers resistance to transcriptional repressors. It is also associated with post-meiotically activated genes on autosomes. In terms of processing, lactylated in macrophages by EP300/P300 by using lactoyl-CoA directly derived from endogenous or exogenous lactate, leading to stimulates gene transcription.

The protein resides in the nucleus. It is found in the chromosome. Functionally, core component of nucleosome. Nucleosomes wrap and compact DNA into chromatin, limiting DNA accessibility to the cellular machineries which require DNA as a template. Histones thereby play a central role in transcription regulation, DNA repair, DNA replication and chromosomal stability. DNA accessibility is regulated via a complex set of post-translational modifications of histones, also called histone code, and nucleosome remodeling. Has broad antibacterial activity. May contribute to the formation of the functional antimicrobial barrier of the colonic epithelium, and to the bactericidal activity of amniotic fluid. The polypeptide is Histone H2B type 1-J (Homo sapiens (Human)).